The sequence spans 452 residues: MSERSVYMVLSPRFSVRAVSLAVAAVSASLSMPTSASMGNLGTSYGVMPVDVATAQSLSMFNEQVSATYYNPAALTKDPRGELTAGILHSEQELRSDNPNASGDIVSDSPSQHVLIGMKTNLGSLTRFGHPIYLGFIAGVEKYGKEMLAFSSETSESGQFLQYGKEPLFLNIGGATPIWRGISAGASVRVTLEATANLDAVSTLGGETSRERLAVNAEPSLKTILGTNIDLGSTFCPESDCFLNGWETALTYRTKSSASTTVDSNIIVTQTIPDPGLSLAVTTIDSFQPETIAIGTQYSGDGWRIGGSIEQQNWSELEDEFSGDSIKDQGSVASGNRIGFDDILIPRLGAEYQLNKNFAVRGGVAYEESPLKTTRNPELNYLDTDKLVVGLGISATYDRTRLLAYPVRLDLGYQYQQLQERDFTVVDYDGDETSVTADGDIHVFSGSITLKF.

The first 36 residues, 1-36, serve as a signal peptide directing secretion; that stretch reads MSERSVYMVLSPRFSVRAVSLAVAAVSASLSMPTSA.

The protein belongs to the OmpP1/FadL family. Interacts with the inner membrane protein AupB.

Its subcellular location is the cell outer membrane. Functionally, required for growth on alkanes. Probably involved in the uptake of micelle-solubilized alkanes. This Marinobacter nauticus (strain ATCC 49840 / DSM 8798 / CIP 103578 / SP17) (Marinobacter hydrocarbonoclasticus) protein is Alkane uptake protein A.